The following is a 502-amino-acid chain: Packaging protein 1 (502 aa).

Residues 99 to 122 (EAMEGQNPTCSRHESAYPIQSQVS) form a disordered region. 226-233 (GPTGCGKS) provides a ligand contact to ATP. The tract at residues 495–502 (RYYHSKKK) is DNA-binding.

Belongs to the adenoviridae packaging protein 1 family. As to quaternary structure, homodimer. Part of a genome packaging complex composed of packaging proteins 1, 2 and 3; this complex specifically binds to the packaging sequence on the left end of viral genomic DNA and performs packaging of the viral genome. Interacts with protein 33K.

Its subcellular location is the virion. The protein resides in the host nucleus. The protein localises to the host nucleoplasm. It is found in the host nucleolus. Component of the packaging machinery which encapsidates the viral DNA into preformed capsids and transcriptional activator of the viral major late promoter (MLP). Binds, along with packaging proteins 2 and 3, to the specific packaging sequence on the left end of viral genomic DNA and displays ATPase activity thereby providing the power stroke of the packaging machinery. The activity of packaging protein IVa2 is stimulated by protein 33K which acts as a terminase. May be the protein that pumps DNA into the capsid powered by ATP hydrolysis. Specifically binds to the 5'-CG-3' nucleotides of the repeats making up the packaging sequence. Component of the DEF-A and DEF-B transcription factors that bind downstream elements of the major late promoter (MLP), and stimulate transcription from the MLP after initiation of viral DNA replication. DEF-A is a heterodimer packaging proteins 1 and 2 and DEF-B is a homodimer of packaging protein 1. This chain is Packaging protein 1, found in Canis lupus familiaris (Dog).